Reading from the N-terminus, the 210-residue chain is Protein DrgA (210 aa).

The protein belongs to the nitroreductase family. It depends on FMN as a cofactor.

In terms of biological role, controls resistance to the herbicide Dinoseb and metronidazole. Involved in detoxification of Dinoseb via the reduction of the nitro group(s) and this process is accompanied by the formation of toxic superoxide anions. The polypeptide is Protein DrgA (drgA) (Synechocystis sp. (strain ATCC 27184 / PCC 6803 / Kazusa)).